The chain runs to 31 residues: Cliotide T10 (31 aa).

The segment at residues Gly-1–Asn-31 is a cross-link (cyclopeptide (Gly-Asn)). 3 cysteine pairs are disulfide-bonded: Cys-4–Cys-21, Cys-8–Cys-23, and Cys-13–Cys-28.

Contains 3 disulfide bonds. Post-translationally, this is a cyclic peptide. In terms of tissue distribution, expressed in seed, root and nodule but not in flower, stem, shoot, leaf and pod (at protein level).

Probably participates in a plant defense mechanism. In Clitoria ternatea (Butterfly pea), this protein is Cliotide T10.